Here is a 929-residue protein sequence, read N- to C-terminus: Ras guanine nucleotide exchange factor M (929 aa).

Residues 1 to 15 (MWQKPSLTKSMMNEV) are compositionally biased toward polar residues. Disordered stretches follow at residues 1 to 102 (MWQK…AAGS) and 169 to 316 (TNNN…SKSL). The segment covering 16–33 (SSNSPKSPTLTSSPSTQS) has biased composition (low complexity). The segment covering 44 to 67 (LDGGGGGSNRLIFGGSGGGSGGGS) has biased composition (gly residues). Composition is skewed to low complexity over residues 68 to 80 (LPSS…VNPF) and 169 to 191 (TNNN…NNDG). The segment covering 192–202 (SGSGSGAGGSF) has biased composition (gly residues). The segment covering 203 to 246 (IGTTTSAKTTSTTSTSAATTTTTTTTSSSSSSPSSSSPSSTSPT) has biased composition (low complexity). Positions 247-256 (IASNNDNNNK) are enriched in polar residues. The span at 270 to 287 (PPLTLSQSQTQQQQQQKV) shows a compositional bias: low complexity. The segment covering 295-305 (RFSTNSSGSQS) has biased composition (polar residues). In terms of domain architecture, N-terminal Ras-GEF spans 390–528 (NKFVVVSGPK…PILDLYEKLK (139 aa)). The disordered stretch occupies residues 540–583 (SLSGSGGISNNNNGSDLKNSNNGNNSSNNNNSSSNSSSSSSSSD). One can recognise a Ras-GEF domain in the interval 676–911 (SPQDIAKQLT…YAFSKFIESP (236 aa)).

Its function is as follows. Promotes the exchange of Ras-bound GDP by GTP. In Dictyostelium discoideum (Social amoeba), this protein is Ras guanine nucleotide exchange factor M (gefM).